A 126-amino-acid polypeptide reads, in one-letter code: Small ribosomal subunit protein uS12 (126 aa).

Residues Met-1–Gln-29 are disordered. Position 89 is a 3-methylthioaspartic acid (Asp-89).

The protein belongs to the universal ribosomal protein uS12 family. As to quaternary structure, part of the 30S ribosomal subunit. Contacts proteins S8 and S17. May interact with IF1 in the 30S initiation complex.

Its function is as follows. With S4 and S5 plays an important role in translational accuracy. Functionally, interacts with and stabilizes bases of the 16S rRNA that are involved in tRNA selection in the A site and with the mRNA backbone. Located at the interface of the 30S and 50S subunits, it traverses the body of the 30S subunit contacting proteins on the other side and probably holding the rRNA structure together. The combined cluster of proteins S8, S12 and S17 appears to hold together the shoulder and platform of the 30S subunit. This Protochlamydia amoebophila (strain UWE25) protein is Small ribosomal subunit protein uS12.